The sequence spans 321 residues: Anthranilate phosphoribosyltransferase (321 aa).

5-phospho-alpha-D-ribose 1-diphosphate-binding positions include Gly-72, 75-76 (GD), Thr-80, 82-85 (NVST), 99-107 (KHGNVSITS), and Ser-111. Residue Gly-72 coordinates anthranilate. Ser-84 is a binding site for Mg(2+). Asn-102 serves as a coordination point for anthranilate. Anthranilate is bound at residue Arg-157. The Mg(2+) site is built by Asp-216 and Glu-217.

This sequence belongs to the anthranilate phosphoribosyltransferase family. In terms of assembly, homodimer. Mg(2+) is required as a cofactor.

It catalyses the reaction N-(5-phospho-beta-D-ribosyl)anthranilate + diphosphate = 5-phospho-alpha-D-ribose 1-diphosphate + anthranilate. The protein operates within amino-acid biosynthesis; L-tryptophan biosynthesis; L-tryptophan from chorismate: step 2/5. Catalyzes the transfer of the phosphoribosyl group of 5-phosphorylribose-1-pyrophosphate (PRPP) to anthranilate to yield N-(5'-phosphoribosyl)-anthranilate (PRA). This is Anthranilate phosphoribosyltransferase from Methanococcus maripaludis (strain DSM 14266 / JCM 13030 / NBRC 101832 / S2 / LL).